A 169-amino-acid polypeptide reads, in one-letter code: NAD(P)H-quinone oxidoreductase subunit 6, chloroplastic (169 aa).

Transmembrane regions (helical) follow at residues 7-27 (FSSA…IFLP), 29-49 (IVYA…IYVL), 58-78 (AQVL…IMLV), 90-110 (SPPL…VQMI), and 139-159 (LLAF…AIVL).

It belongs to the complex I subunit 6 family. As to quaternary structure, NDH is composed of at least 16 different subunits, 5 of which are encoded in the nucleus.

The protein resides in the plastid. The protein localises to the chloroplast thylakoid membrane. It catalyses the reaction a plastoquinone + NADH + (n+1) H(+)(in) = a plastoquinol + NAD(+) + n H(+)(out). It carries out the reaction a plastoquinone + NADPH + (n+1) H(+)(in) = a plastoquinol + NADP(+) + n H(+)(out). NDH shuttles electrons from NAD(P)H:plastoquinone, via FMN and iron-sulfur (Fe-S) centers, to quinones in the photosynthetic chain and possibly in a chloroplast respiratory chain. The immediate electron acceptor for the enzyme in this species is believed to be plastoquinone. Couples the redox reaction to proton translocation, and thus conserves the redox energy in a proton gradient. This Nephroselmis olivacea (Green alga) protein is NAD(P)H-quinone oxidoreductase subunit 6, chloroplastic (ndhG).